A 137-amino-acid polypeptide reads, in one-letter code: Ribosome-binding factor A (137 aa).

This sequence belongs to the RbfA family. Monomer. Binds 30S ribosomal subunits, but not 50S ribosomal subunits or 70S ribosomes.

It localises to the cytoplasm. Functionally, one of several proteins that assist in the late maturation steps of the functional core of the 30S ribosomal subunit. Associates with free 30S ribosomal subunits (but not with 30S subunits that are part of 70S ribosomes or polysomes). Required for efficient processing of 16S rRNA. May interact with the 5'-terminal helix region of 16S rRNA. In Nitrobacter winogradskyi (strain ATCC 25391 / DSM 10237 / CIP 104748 / NCIMB 11846 / Nb-255), this protein is Ribosome-binding factor A.